The primary structure comprises 374 residues: Alginate lyase (374 aa).

Residues Met1–Ala26 form the signal peptide. Residues Ser67–Lys68, His140–Thr141, and Tyr258 each bind substrate.

It belongs to the polysaccharide lyase 5 family.

The protein localises to the periplasm. It carries out the reaction Eliminative cleavage of alginate to give oligosaccharides with 4-deoxy-alpha-L-erythro-hex-4-enuronosyl groups at their non-reducing ends and beta-D-mannuronate at their reducing end.. Its function is as follows. Catalyzes the depolymerization of alginate by cleaving the beta-1,4 glycosidic bond between two adjacent sugar residues via a beta-elimination mechanism. May serve to degrade mislocalized alginate that is trapped in the periplasmic space. This chain is Alginate lyase, found in Cobetia marina (Deleya marina).